The following is a 1073-amino-acid chain: Receptor-type guanylate cyclase gcy-23 (1073 aa).

An N-terminal signal peptide occupies residues 1–15 (MRRELFIFLLLLGEC). Residues 16 to 458 (ANVKVKVGHI…FRNEKCDYTT (443 aa)) lie on the Extracellular side of the membrane. N-linked (GlcNAc...) asparagine glycosylation occurs at Asn336. A helical membrane pass occupies residues 459–479 (LIIGGCIVLLIILLIICFFIL). The Cytoplasmic portion of the chain corresponds to 480–1073 (SRVCENRALA…QQQNFSQLGI (594 aa)). Residues 508–808 (MKSMLSIGSS…RVRLNTENYL (301 aa)) form the Protein kinase domain. Residues 813-844 (SLVDQMMRMMEQYANNLEKLVAERTGMLEEAN) adopt a coiled-coil conformation. The Guanylate cyclase domain occupies 878–1008 (TVMFSDIVGF…DTVNVASRME (131 aa)). Mg(2+) contacts are provided by Asp883, Ile884, and Asp927.

It belongs to the adenylyl cyclase class-4/guanylyl cyclase family. As to expression, expressed specifically in AFD sensory neurons.

The protein localises to the cell membrane. The protein resides in the cell projection. Its subcellular location is the cilium. The catalysed reaction is GTP = 3',5'-cyclic GMP + diphosphate. Functionally, guanylate cyclase involved in the production of the second messenger cGMP. Regulates thermotaxis responses in AFD sensory neurons. May regulate AFD neuronal activity such as calcium responses to temperature gradients. The chain is Receptor-type guanylate cyclase gcy-23 from Caenorhabditis elegans.